A 318-amino-acid chain; its full sequence is Malate dehydrogenase (318 aa).

NAD(+) is bound by residues glycine 10–glycine 15 and aspartate 34. Arginine 83 and arginine 89 together coordinate substrate. Residues asparagine 96 and leucine 119 to asparagine 121 contribute to the NAD(+) site. Asparagine 121 and arginine 152 together coordinate substrate. The active-site Proton acceptor is histidine 176.

Belongs to the LDH/MDH superfamily. MDH type 3 family.

It carries out the reaction (S)-malate + NAD(+) = oxaloacetate + NADH + H(+). Functionally, catalyzes the reversible oxidation of malate to oxaloacetate. The polypeptide is Malate dehydrogenase (Syntrophotalea carbinolica (strain DSM 2380 / NBRC 103641 / GraBd1) (Pelobacter carbinolicus)).